The sequence spans 72 residues: Translation initiation factor IF-1 (72 aa).

Residues 1-72 (MAKQDVIELE…SRGRITYRYK (72 aa)) enclose the S1-like domain.

The protein belongs to the IF-1 family. Component of the 30S ribosomal translation pre-initiation complex which assembles on the 30S ribosome in the order IF-2 and IF-3, IF-1 and N-formylmethionyl-tRNA(fMet); mRNA recruitment can occur at any time during PIC assembly.

The protein resides in the cytoplasm. In terms of biological role, one of the essential components for the initiation of protein synthesis. Stabilizes the binding of IF-2 and IF-3 on the 30S subunit to which N-formylmethionyl-tRNA(fMet) subsequently binds. Helps modulate mRNA selection, yielding the 30S pre-initiation complex (PIC). Upon addition of the 50S ribosomal subunit IF-1, IF-2 and IF-3 are released leaving the mature 70S translation initiation complex. The protein is Translation initiation factor IF-1 of Staphylococcus epidermidis (strain ATCC 35984 / DSM 28319 / BCRC 17069 / CCUG 31568 / BM 3577 / RP62A).